We begin with the raw amino-acid sequence, 63 residues long: Toxin Cn11 (63 aa).

The region spanning 2–63 (RDGYPVDEKG…KVWTYETNTC (62 aa)) is the LCN-type CS-alpha/beta domain. 4 cysteine pairs are disulfide-bonded: Cys12/Cys63, Cys16/Cys37, Cys23/Cys44, and Cys27/Cys46.

It belongs to the long (4 C-C) scorpion toxin superfamily. Sodium channel inhibitor family. In terms of tissue distribution, expressed by the venom gland.

It localises to the secreted. First blocker of sodium channels (Nav) found in scorpions. Is lethal to crustaceans (Cambarellus montezumae), less toxic to insects (crickets) and non-toxic to mammals (mice) at the doses assayed. This Centruroides noxius (Mexican scorpion) protein is Toxin Cn11.